Consider the following 114-residue polypeptide: Amphinase-3 (114 aa).

His15 serves as the catalytic Proton acceptor. Asn25 carries N-linked (GlcNAc...) asparagine glycosylation. 4 disulfides stabilise this stretch: Cys26/Cys79, Cys41/Cys85, Cys59/Cys100, and Cys97/Cys114. Position 42-46 (42-46 (KPINT)) interacts with substrate. Residues Asn67 and Asn91 are each glycosylated (N-linked (GlcNAc...) asparagine). The Proton donor role is filled by His107.

This sequence belongs to the pancreatic ribonuclease family. In terms of assembly, monomer. There are at least five different forms arising from glycan heterogeneity.

The protein resides in the secreted. In terms of biological role, endonuclease, hydrolyzes highly polymerized RNA, poly(U) and poly(C), and the dinucleotides CpA and UpA. More active towards rCA than rUA or rUG. Has cytotoxic activity against cultured human submaxillary gland carcinoma cells. The polypeptide is Amphinase-3 (Lithobates pipiens (Northern leopard frog)).